We begin with the raw amino-acid sequence, 568 residues long: TNF receptor-associated factor 3 (568 aa).

The interval 1 to 28 (MESSKKMDSPGALQTNPPLKLHTDRSAG) is disordered. Ser-9 carries the phosphoserine modification. Residue Cys-56 forms a Glycyl cysteine thioester (Cys-Gly) (interchain with G-Cter in ubiquitin) linkage. An RING-type zinc finger spans residues 68–77 (CGHRFCESCM). Cys-124 is covalently cross-linked (Glycyl cysteine thioester (Cys-Gly) (interchain with G-Cter in ubiquitin)). TRAF-type zinc fingers lie at residues 135-190 (VHLK…IALQ) and 191-249 (KHED…QQIK). A Glycyl lysine isopeptide (Lys-Gly) (interchain with G-Cter in ubiquitin) cross-link involves residue Lys-168. Positions 267 to 338 (SNSLEKKVSL…KLKELDKEIR (72 aa)) form a coiled coil. Residue Lys-329 forms a Glycyl lysine isopeptide (Lys-Gly) (interchain with G-Cter in ubiquitin) linkage. Residues 392 to 415 (LSVHDIRLADMDLRFQVLETASYN) are (Microbial infection) Interaction with glycoprotein N of Andes and New York hantaviruses. The MATH domain maps to 415–560 (NGVLIWKIRD…DDTIFIKVIV (146 aa)).

It belongs to the TNF receptor-associated factor family. A subfamily. Homotrimer. Heterotrimer with TRAF2 and TRAF5. Interacts with LTBR/TNFRSF3, TNFRSF4, TNFRSF5/CD40, TNFRSF8/CD30, TNFRSF13C TNFRSF17/BCMA, TLR4 and EDAR. Interacts with MAP3K5, MAP3K14, TRAIP/TRIP, TDP2/TTRAP, TANK/ITRAF and TRAF3IP1. Interaction with TNFRSF5/CD40 is modulated by TANK/ITRAF, which competes for the same binding site. Interacts with TICAM1. Interacts with TRAFD1. Interacts with OTUB1, OTUB2 and OTUD5. Interacts with RNF216, OPTN and TBK1. Identified in a complex with TRAF2, MAP3K14 and BIRC3. Interacts with BIRC2 and BIRC3. Upon exposure to bacterial lipopolysaccharide (LPS), recruited to a transient complex containing TLR4, TRAF3, TRAF6, IKBKG, MAP3K7, MYD88, TICAM1, BIRC2, BIRC3 and UBE2N. Interacts (via RING-type zinc finger domain) with SRC. Interacts with CARD14. Interacts (via MATH domain) with PTPN22; the interaction promotes TRAF3 polyubiquitination. Interacts with MAVS. Directly interacts with DDX3X; this interaction stimulates TRAF3 'Lys-63' ubiquitination. Interacts with IRF3. Interacts with IKBKE in the course of Sendai virus infection. Interacts with TRIM35. Interacts with GAPDH; promoting TRAF3 ubiquitination. Interacts with PPP3CA and PPP3CB. Interacts with ATP1B1; promoting TRAF3 ubiquitination. Interacts with RALGDS. Interacts with FBXO11. As to quaternary structure, (Microbial infection) Interacts (via N-terminus) with New York hantavirus glycoprotein N (via C-terminus); this interaction inhibits the formation of TRAF3-TBK1 complexes. In terms of assembly, (Microbial infection) Interacts with Andes hantavirus glycoprotein N (via C-terminus); this interaction inhibits the formation of TRAF3-TBK1 complexes. (Microbial infection) Interacts with Tula hantavirus glycoprotein N (via C-terminus); this interaction inhibits the formation of TRAF3-TBK1 complexes. As to quaternary structure, (Microbial infection) Interacts with Epstein-Barr virus protein LMP1. Undergoes 'Lys-48'-linked polyubiquitination, leading to its proteasomal degradation in response to signaling by TNFSF13B, TLR4 or through CD40. 'Lys-48'-linked polyubiquitinated form is deubiquitinated by OTUD7B, preventing TRAF3 proteolysis and over-activation of non-canonical NF-kappa-B. Undergoes 'Lys-63'-linked ubiquitination during early stages of virus infection, and 'Lys-48'-linked ubiquitination during later stages. Undergoes both 'Lys-48'-linked and 'Lys-63'-linked ubiquitination in response to TLR3 and TLR4 signaling. 'Lys-63'-linked ubiquitination can be mediated by TRIM35. Deubiquitinated by OTUB1, OTUB2 and OTUD5. Undergoes 'Lys-63'-linked deubiquitination by MYSM1 to terminate the pattern-recognition receptors/PRRs pathways. Also undergoes 'Lys-29'-linked ubiquitination on Cys-56 and Cys-124 by NEDD4L; leading to increased 'Lys-48'- and 'Lys-63'-linked ubiquitination as well as increased binding to TBK1. TLR4 signals emanating from bacteria containing vesicles trigger 'Lys-33'-linked polyubiquitination that promotes the assembly of the exocyst complex thereby connecting innate immune signaling to the cellular trafficking apparatus. Deubiquitinated by USP25 during viral infection, leading to TRAF3 stabilization and type I interferon production. Ubiquitinated at Lys-329 by the SCF(FBXL2) complex, leading to its degradation by the proteasome. 'Lys-63'-linked ubiquitination by FBXO11 in a NEDD8-dependent manner promotes the amplification of IFN-I signaling. In terms of processing, (Microbial infection) Cleaved by enterovirus D68 protease 2A; leading to inhibition of NF-kappa-B or IFN-beta triggered by TRAF3.

The protein resides in the cytoplasm. It localises to the endosome. Its subcellular location is the mitochondrion. It catalyses the reaction S-ubiquitinyl-[E2 ubiquitin-conjugating enzyme]-L-cysteine + [acceptor protein]-L-lysine = [E2 ubiquitin-conjugating enzyme]-L-cysteine + N(6)-ubiquitinyl-[acceptor protein]-L-lysine.. Functionally, cytoplasmic E3 ubiquitin ligase that regulates various signaling pathways, such as the NF-kappa-B, mitogen-activated protein kinase (MAPK) and interferon regulatory factor (IRF) pathways, and thus controls a lot of biological processes in both immune and non-immune cell types. In TLR and RLR signaling pathways, acts as an E3 ubiquitin ligase promoting the synthesis of 'Lys-63'-linked polyubiquitin chains on several substrates such as ASC that lead to the activation of the type I interferon response or the inflammasome. Following the activation of certain TLRs such as TLR4, acts as a negative NF-kappa-B regulator, possibly to avoid unregulated inflammatory response, and its degradation via 'Lys-48'-linked polyubiquitination is required for MAPK activation and production of inflammatory cytokines. Alternatively, when TLR4 orchestrates bacterial expulsion, TRAF3 undergoes 'Lys-33'-linked polyubiquitination and subsequently binds to RALGDS, mobilizing the exocyst complex to rapidly expel intracellular bacteria back for clearance. Also acts as a constitutive negative regulator of the alternative NF-kappa-B pathway, which controls B-cell survival and lymphoid organ development. Required for normal antibody isotype switching from IgM to IgG. Plays a role T-cell dependent immune responses. Down-regulates proteolytic processing of NFKB2, and thereby inhibits non-canonical activation of NF-kappa-B. Promotes ubiquitination and proteasomal degradation of MAP3K14. The polypeptide is TNF receptor-associated factor 3 (Homo sapiens (Human)).